The sequence spans 255 residues: Hydroxyacylglutathione hydrolase (255 aa).

Zn(2+) contacts are provided by histidine 52, histidine 54, aspartate 56, histidine 57, histidine 109, aspartate 126, and histidine 166.

The protein belongs to the metallo-beta-lactamase superfamily. Glyoxalase II family. As to quaternary structure, monomer. It depends on Zn(2+) as a cofactor.

The enzyme catalyses an S-(2-hydroxyacyl)glutathione + H2O = a 2-hydroxy carboxylate + glutathione + H(+). The protein operates within secondary metabolite metabolism; methylglyoxal degradation; (R)-lactate from methylglyoxal: step 2/2. Thiolesterase that catalyzes the hydrolysis of S-D-lactoyl-glutathione to form glutathione and D-lactic acid. This is Hydroxyacylglutathione hydrolase from Anaeromyxobacter dehalogenans (strain 2CP-C).